Reading from the N-terminus, the 284-residue chain is Lipase chaperone (284 aa).

The chain crosses the membrane as a helical span at residues I4–S24.

Belongs to the lipase chaperone family.

It is found in the cell inner membrane. In terms of biological role, may be involved in the folding of the extracellular lipase during its passage through the periplasm. The chain is Lipase chaperone (lifO) from Vibrio cholerae serotype O1 (strain ATCC 39315 / El Tor Inaba N16961).